A 438-amino-acid chain; its full sequence is Mannose-1-phosphate guanylyltransferase regulatory subunit alpha (438 aa).

Residues 2–260 (LKAVILIGGP…PNWWSQLKTA (259 aa)) are substrate-binding domain. Residues glutamate 87 and glutamine 256 each contribute to the GDP-alpha-D-mannose site. The interval 282 to 438 (LANVGIKRGE…SRSFKNEIIL (157 aa)) is hexapeptide repeat domain. The C-loop stretch occupies residues 373–402 (TPSDPDPNKPFAKMENPPLFNNEGKLNPSI).

This sequence belongs to the transferase hexapeptide repeat family. Component of the GMPPA-GMPPB mannose-1-phosphate guanylyltransferase complex composed of 4 GMPPA subunits and 8 GMPPB subunits; the complex is organized into three layers, a central layer made up of 2 GMPPA dimers sandwiched between two layers each made up of 2 GMPPB dimers.

Its function is as follows. Regulatory subunit of the GMPPA-GMPPB mannose-1-phosphate guanylyltransferase complex; reduces the catalytic activity of GMPPB when part of the complex. Mediates allosteric feedback inhibition of GMPPB catalytic activity upon binding GDP-alpha-D-mannose. Together with GMPPB regulates GDP-alpha-D-mannose levels. The sequence is that of Mannose-1-phosphate guanylyltransferase regulatory subunit alpha from Drosophila melanogaster (Fruit fly).